A 398-amino-acid chain; its full sequence is Dual-specificity RNA methyltransferase RlmN (398 aa).

E119 (proton acceptor) is an active-site residue. A Radical SAM core domain is found at 125 to 364; it reads EADRATLCVS…TIVRKTRGDD (240 aa). An intrachain disulfide couples C132 to C369. Residues C139, C143, and C146 each coordinate [4Fe-4S] cluster. Residues 193–194, S225, 247–249, and N326 each bind S-adenosyl-L-methionine; these read GE and SLH. The active-site S-methylcysteine intermediate is C369.

It belongs to the radical SAM superfamily. RlmN family. Requires [4Fe-4S] cluster as cofactor.

The protein resides in the cytoplasm. The catalysed reaction is adenosine(2503) in 23S rRNA + 2 reduced [2Fe-2S]-[ferredoxin] + 2 S-adenosyl-L-methionine = 2-methyladenosine(2503) in 23S rRNA + 5'-deoxyadenosine + L-methionine + 2 oxidized [2Fe-2S]-[ferredoxin] + S-adenosyl-L-homocysteine. It catalyses the reaction adenosine(37) in tRNA + 2 reduced [2Fe-2S]-[ferredoxin] + 2 S-adenosyl-L-methionine = 2-methyladenosine(37) in tRNA + 5'-deoxyadenosine + L-methionine + 2 oxidized [2Fe-2S]-[ferredoxin] + S-adenosyl-L-homocysteine. In terms of biological role, specifically methylates position 2 of adenine 2503 in 23S rRNA and position 2 of adenine 37 in tRNAs. m2A2503 modification seems to play a crucial role in the proofreading step occurring at the peptidyl transferase center and thus would serve to optimize ribosomal fidelity. In Yersinia pseudotuberculosis serotype IB (strain PB1/+), this protein is Dual-specificity RNA methyltransferase RlmN.